Consider the following 122-residue polypeptide: Large ribosomal subunit protein uL14 (122 aa).

It belongs to the universal ribosomal protein uL14 family. Part of the 50S ribosomal subunit. Forms a cluster with proteins L3 and L19. In the 70S ribosome, L14 and L19 interact and together make contacts with the 16S rRNA in bridges B5 and B8.

Functionally, binds to 23S rRNA. Forms part of two intersubunit bridges in the 70S ribosome. This chain is Large ribosomal subunit protein uL14, found in Thermodesulfovibrio yellowstonii (strain ATCC 51303 / DSM 11347 / YP87).